The following is a 367-amino-acid chain: UDP-N-acetylglucosamine--N-acetylmuramyl-(pentapeptide) pyrophosphoryl-undecaprenol N-acetylglucosamine transferase (367 aa).

Residues Thr-21 to Gly-23, Asn-129, Arg-170, Ser-198, and Gln-295 each bind UDP-N-acetyl-alpha-D-glucosamine.

This sequence belongs to the glycosyltransferase 28 family. MurG subfamily.

The protein resides in the cell inner membrane. The enzyme catalyses di-trans,octa-cis-undecaprenyl diphospho-N-acetyl-alpha-D-muramoyl-L-alanyl-D-glutamyl-meso-2,6-diaminopimeloyl-D-alanyl-D-alanine + UDP-N-acetyl-alpha-D-glucosamine = di-trans,octa-cis-undecaprenyl diphospho-[N-acetyl-alpha-D-glucosaminyl-(1-&gt;4)]-N-acetyl-alpha-D-muramoyl-L-alanyl-D-glutamyl-meso-2,6-diaminopimeloyl-D-alanyl-D-alanine + UDP + H(+). It functions in the pathway cell wall biogenesis; peptidoglycan biosynthesis. Cell wall formation. Catalyzes the transfer of a GlcNAc subunit on undecaprenyl-pyrophosphoryl-MurNAc-pentapeptide (lipid intermediate I) to form undecaprenyl-pyrophosphoryl-MurNAc-(pentapeptide)GlcNAc (lipid intermediate II). The protein is UDP-N-acetylglucosamine--N-acetylmuramyl-(pentapeptide) pyrophosphoryl-undecaprenol N-acetylglucosamine transferase of Synechococcus sp. (strain JA-2-3B'a(2-13)) (Cyanobacteria bacterium Yellowstone B-Prime).